Consider the following 513-residue polypeptide: Maturase K (513 aa).

Belongs to the intron maturase 2 family. MatK subfamily.

Its subcellular location is the plastid. It localises to the chloroplast. In terms of biological role, usually encoded in the trnK tRNA gene intron. Probably assists in splicing its own and other chloroplast group II introns. This chain is Maturase K, found in Eleusine indica (Goosegrass).